The chain runs to 122 residues: Zein-alpha B49 (122 aa).

This sequence belongs to the zein family.

In terms of biological role, zeins are major seed storage proteins. The polypeptide is Zein-alpha B49 (Zea mays (Maize)).